A 153-amino-acid polypeptide reads, in one-letter code: Aspartate carbamoyltransferase regulatory chain (153 aa).

The Zn(2+) site is built by Cys-109, Cys-114, Cys-138, and Cys-141.

Belongs to the PyrI family. Contains catalytic and regulatory chains. Zn(2+) serves as cofactor.

Its function is as follows. Involved in allosteric regulation of aspartate carbamoyltransferase. This is Aspartate carbamoyltransferase regulatory chain from Escherichia coli O7:K1 (strain IAI39 / ExPEC).